The primary structure comprises 320 residues: Lipoyl synthase (320 aa).

The [4Fe-4S] cluster site is built by Cys-67, Cys-72, Cys-78, Cys-93, Cys-97, Cys-100, and Ser-307. The 218-residue stretch at 79-296 (FNHGTATFMI…GVIAKEIGFT (218 aa)) folds into the Radical SAM core domain.

The protein belongs to the radical SAM superfamily. Lipoyl synthase family. The cofactor is [4Fe-4S] cluster.

It is found in the cytoplasm. It catalyses the reaction [[Fe-S] cluster scaffold protein carrying a second [4Fe-4S](2+) cluster] + N(6)-octanoyl-L-lysyl-[protein] + 2 oxidized [2Fe-2S]-[ferredoxin] + 2 S-adenosyl-L-methionine + 4 H(+) = [[Fe-S] cluster scaffold protein] + N(6)-[(R)-dihydrolipoyl]-L-lysyl-[protein] + 4 Fe(3+) + 2 hydrogen sulfide + 2 5'-deoxyadenosine + 2 L-methionine + 2 reduced [2Fe-2S]-[ferredoxin]. The protein operates within protein modification; protein lipoylation via endogenous pathway; protein N(6)-(lipoyl)lysine from octanoyl-[acyl-carrier-protein]: step 2/2. Its function is as follows. Catalyzes the radical-mediated insertion of two sulfur atoms into the C-6 and C-8 positions of the octanoyl moiety bound to the lipoyl domains of lipoate-dependent enzymes, thereby converting the octanoylated domains into lipoylated derivatives. This is Lipoyl synthase from Pseudoalteromonas atlantica (strain T6c / ATCC BAA-1087).